The sequence spans 697 residues: Potassium-transporting ATPase ATP-binding subunit (697 aa).

The next 4 membrane-spanning stretches (helical) occupy residues 55–75 (PIMF…FLPS), 79–99 (SIPG…VLFA), 245–265 (LTLI…YLGF), and 271–291 (VLVA…LSAI). Asp-324 (4-aspartylphosphate intermediate) is an active-site residue. Residues Asp-361, Glu-365, 393 to 400 (FKAETRMS), and Lys-412 contribute to the ATP site. 2 residues coordinate Mg(2+): Asp-535 and Asp-539. 3 helical membrane passes run 605–625 (FAII…LNIM), 633–653 (AILS…PLAM), and 677–697 (GGVI…GLFI).

Belongs to the cation transport ATPase (P-type) (TC 3.A.3) family. Type IA subfamily. The system is composed of three essential subunits: KdpA, KdpB and KdpC.

The protein resides in the cell membrane. It carries out the reaction K(+)(out) + ATP + H2O = K(+)(in) + ADP + phosphate + H(+). Its function is as follows. Part of the high-affinity ATP-driven potassium transport (or Kdp) system, which catalyzes the hydrolysis of ATP coupled with the electrogenic transport of potassium into the cytoplasm. This subunit is responsible for energy coupling to the transport system and for the release of the potassium ions to the cytoplasm. This Bacillus cereus (strain ATCC 14579 / DSM 31 / CCUG 7414 / JCM 2152 / NBRC 15305 / NCIMB 9373 / NCTC 2599 / NRRL B-3711) protein is Potassium-transporting ATPase ATP-binding subunit.